A 538-amino-acid polypeptide reads, in one-letter code: uncharacterized protein (538 aa).

A signal peptide spans 1–17 (MNLQILLLLLLFCHVAA). N-linked (GlcNAc...) asparagine glycosylation is present at Asn-115.

This is an uncharacterized protein from Caenorhabditis elegans.